Here is a 301-residue protein sequence, read N- to C-terminus: Acetylglutamate kinase (301 aa).

Substrate contacts are provided by residues 72–73, Arg94, and Asn199; that span reads GG.

Belongs to the acetylglutamate kinase family. ArgB subfamily.

The protein resides in the cytoplasm. The enzyme catalyses N-acetyl-L-glutamate + ATP = N-acetyl-L-glutamyl 5-phosphate + ADP. It participates in amino-acid biosynthesis; L-arginine biosynthesis; N(2)-acetyl-L-ornithine from L-glutamate: step 2/4. Catalyzes the ATP-dependent phosphorylation of N-acetyl-L-glutamate. The protein is Acetylglutamate kinase of Bartonella quintana (strain Toulouse) (Rochalimaea quintana).